A 176-amino-acid polypeptide reads, in one-letter code: DNA repair RAD52-like protein 1, mitochondrial (176 aa).

Residues 1–37 (MAGLGLRLKAAKWTLRSGSGAVSREWSSEMGKGVRRF) constitute a mitochondrion transit peptide.

Belongs to the RAD52 family. In terms of assembly, interacts with WHY2. As to expression, expressed in root vascular tissue, tips of primary and secondary roots, young leaves, hydathodes, stomatal guard cells, cauline leaves, flower buds, stipules, carpels, pistils and anther filaments.

The protein resides in the mitochondrion. Its subcellular location is the nucleus. Its function is as follows. Plant-specific single-stranded DNA-binding protein required for efficient heterologous recombination-dependent DNA repair in nuclear and mitochondrial compartments. Forms large nucleo-protein complexes with WHY2 in mitochondria. Binds ssDNA with high affinity, but with little sequence specificity. Involved in double-stranded DNA break repair. Involved in the hydrolytic splicing pathway in mitochondrion. Facilitates the excision of two cis-spliced group II introns, NAD1 intron 2 and NAD2 intron 1. The protein is DNA repair RAD52-like protein 1, mitochondrial of Arabidopsis thaliana (Mouse-ear cress).